Reading from the N-terminus, the 803-residue chain is Phosphoribosylformylglycinamidine synthase subunit PurL (803 aa).

His65 is a catalytic residue. Tyr68 and Lys107 together coordinate ATP. Glu109 contributes to the Mg(2+) binding site. Residues 110–113 (SHNH) and Arg132 contribute to the substrate site. The active-site Proton acceptor is the His111. Asp133 is a binding site for Mg(2+). Gln256 contacts substrate. Asp284 lines the Mg(2+) pocket. 328–330 (ESQ) contacts substrate. ATP-binding residues include Asn537 and Gly574. Asn575 lines the Mg(2+) pocket. Position 577 (Ser577) interacts with substrate.

It belongs to the FGAMS family. Monomer. Part of the FGAM synthase complex composed of 1 PurL, 1 PurQ and 2 PurS subunits.

It is found in the cytoplasm. It catalyses the reaction N(2)-formyl-N(1)-(5-phospho-beta-D-ribosyl)glycinamide + L-glutamine + ATP + H2O = 2-formamido-N(1)-(5-O-phospho-beta-D-ribosyl)acetamidine + L-glutamate + ADP + phosphate + H(+). It functions in the pathway purine metabolism; IMP biosynthesis via de novo pathway; 5-amino-1-(5-phospho-D-ribosyl)imidazole from N(2)-formyl-N(1)-(5-phospho-D-ribosyl)glycinamide: step 1/2. Functionally, part of the phosphoribosylformylglycinamidine synthase complex involved in the purines biosynthetic pathway. Catalyzes the ATP-dependent conversion of formylglycinamide ribonucleotide (FGAR) and glutamine to yield formylglycinamidine ribonucleotide (FGAM) and glutamate. The FGAM synthase complex is composed of three subunits. PurQ produces an ammonia molecule by converting glutamine to glutamate. PurL transfers the ammonia molecule to FGAR to form FGAM in an ATP-dependent manner. PurS interacts with PurQ and PurL and is thought to assist in the transfer of the ammonia molecule from PurQ to PurL. The protein is Phosphoribosylformylglycinamidine synthase subunit PurL of Prochlorococcus marinus (strain NATL2A).